The chain runs to 173 residues: Small ribosomal subunit protein uS5 (173 aa).

The S5 DRBM domain maps to 17–80 (LREKMIAVNR…EESRRNMIKV (64 aa)).

Belongs to the universal ribosomal protein uS5 family. Part of the 30S ribosomal subunit. Contacts proteins S4 and S8.

In terms of biological role, with S4 and S12 plays an important role in translational accuracy. Functionally, located at the back of the 30S subunit body where it stabilizes the conformation of the head with respect to the body. The chain is Small ribosomal subunit protein uS5 from Delftia acidovorans (strain DSM 14801 / SPH-1).